The primary structure comprises 183 residues: Ribosome-recycling factor (183 aa).

It belongs to the RRF family.

Its subcellular location is the cytoplasm. In terms of biological role, responsible for the release of ribosomes from messenger RNA at the termination of protein biosynthesis. May increase the efficiency of translation by recycling ribosomes from one round of translation to another. This chain is Ribosome-recycling factor, found in Ureaplasma urealyticum serovar 10 (strain ATCC 33699 / Western).